The primary structure comprises 234 residues: Cell polarity protein alp11 (234 aa).

Residues 4-88 (ITLFIKSSSA…IVVEDTRPPH (85 aa)) enclose the Ubiquitin-like domain. Positions 174–216 (VPEINNDNLWVGVEFDEPVGKNDGTVSGKRYFNAKNKHGSFLR) constitute a CAP-Gly domain. Ser213 is subject to Phosphoserine.

The protein belongs to the TBCB family. Binds to monomeric alpha-tubulin. Interacts with alp21.

It is found in the cytoplasm. The protein localises to the cytoskeleton. Functionally, required for microtubule function and cell polarity. Involved in the proper folding of alpha-tubulin. In Schizosaccharomyces pombe (strain 972 / ATCC 24843) (Fission yeast), this protein is Cell polarity protein alp11 (alp11).